A 158-amino-acid chain; its full sequence is Putative 8-oxo-dGTP diphosphatase YtkD (158 aa).

The Nudix hydrolase domain maps to 6-145 (DYYQNTVQLS…SFIMKDSVLP (140 aa)). The short motif at 53 to 74 (GKVEPMECAEEAALREVKEETG) is the Nudix box element. Positions 68 and 72 each coordinate Mg(2+).

The protein belongs to the Nudix hydrolase family. It depends on Mg(2+) as a cofactor.

It catalyses the reaction 8-oxo-dGTP + H2O = 8-oxo-dGMP + diphosphate + H(+). Its activity is regulated as follows. Not induced by oxidative damage (following treatment with paraquat or hydrogen peroxide). Not induced by mitomycin C. Not induced by sigma-B general stress inducers such as sodium chloride, ethanol or heat. Its function is as follows. Involved in the GO system responsible for removing an oxidatively damaged form of guanine (7,8-dihydro-8-oxoguanine, 8-oxo-dGTP) from DNA and the nucleotide pool. 8-oxo-dGTP is inserted opposite dA and dC residues of template DNA with almost equal efficiency thus leading to A.T to G.C transversions. Functions, in conjunction with MutT, to protect vegetatively growing cells from DNA-damaging agents such as H(2)O(2) or t-BHP (t-butylhydroperoxide). The 2 proteins do not however protect spores. According to PubMed:15576788, phosphohydrolase that catalyzes the hydrolysis of all common nucleoside triphosphates as well as of the mutagenic analog 8-oxo-dGTP. The high catalytic efficiency on dGTP is in contrast to results from PubMed:14761999. According to PubMed:14761999, catalyzes the hydrolysis of 8-oxo-dGTP with a specific activity 413 times higher than that exhibited against dGTP. Preferentially catalyzes the hydrolysis of 8-oxo-dGTP and 8-oxo-GTP. According to PubMed:15576788, hydrolyzes nucleoside triphosphates in a stepwise fashion through the diphosphate to the monophosphate, releasing two molecules of inorganic orthophosphate. The chain is Putative 8-oxo-dGTP diphosphatase YtkD (ytkD) from Bacillus subtilis (strain 168).